Here is a 385-residue protein sequence, read N- to C-terminus: Probable tRNA sulfurtransferase (385 aa).

Residues 57–161 (NESIKRLSNV…NKNAYVWSNK (105 aa)) enclose the THUMP domain. Residues 181-182 (ML), 206-207 (YY), R263, G285, and Q294 each bind ATP.

This sequence belongs to the ThiI family.

The protein localises to the cytoplasm. The catalysed reaction is [ThiI sulfur-carrier protein]-S-sulfanyl-L-cysteine + a uridine in tRNA + 2 reduced [2Fe-2S]-[ferredoxin] + ATP + H(+) = [ThiI sulfur-carrier protein]-L-cysteine + a 4-thiouridine in tRNA + 2 oxidized [2Fe-2S]-[ferredoxin] + AMP + diphosphate. It catalyses the reaction [ThiS sulfur-carrier protein]-C-terminal Gly-Gly-AMP + S-sulfanyl-L-cysteinyl-[cysteine desulfurase] + AH2 = [ThiS sulfur-carrier protein]-C-terminal-Gly-aminoethanethioate + L-cysteinyl-[cysteine desulfurase] + A + AMP + 2 H(+). It participates in cofactor biosynthesis; thiamine diphosphate biosynthesis. In terms of biological role, catalyzes the ATP-dependent transfer of a sulfur to tRNA to produce 4-thiouridine in position 8 of tRNAs, which functions as a near-UV photosensor. Also catalyzes the transfer of sulfur to the sulfur carrier protein ThiS, forming ThiS-thiocarboxylate. This is a step in the synthesis of thiazole, in the thiamine biosynthesis pathway. The sulfur is donated as persulfide by IscS. This Clostridium botulinum (strain Alaska E43 / Type E3) protein is Probable tRNA sulfurtransferase.